Here is a 158-residue protein sequence, read N- to C-terminus: D-aminoacyl-tRNA deacylase (158 aa).

Residues 143 to 144 (GP) carry the Gly-cisPro motif, important for rejection of L-amino acids motif.

Belongs to the DTD family. Homodimer.

It is found in the cytoplasm. The catalysed reaction is glycyl-tRNA(Ala) + H2O = tRNA(Ala) + glycine + H(+). The enzyme catalyses a D-aminoacyl-tRNA + H2O = a tRNA + a D-alpha-amino acid + H(+). Functionally, an aminoacyl-tRNA editing enzyme that deacylates mischarged D-aminoacyl-tRNAs. Also deacylates mischarged glycyl-tRNA(Ala), protecting cells against glycine mischarging by AlaRS. Acts via tRNA-based rather than protein-based catalysis; rejects L-amino acids rather than detecting D-amino acids in the active site. By recycling D-aminoacyl-tRNA to D-amino acids and free tRNA molecules, this enzyme counteracts the toxicity associated with the formation of D-aminoacyl-tRNA entities in vivo and helps enforce protein L-homochirality. In Solidesulfovibrio magneticus (strain ATCC 700980 / DSM 13731 / RS-1) (Desulfovibrio magneticus), this protein is D-aminoacyl-tRNA deacylase.